The sequence spans 210 residues: Protein GrpE (210 aa).

The interval 1-42 is disordered; that stretch reads MANEERTIPETNVASERPEDPVESQTRAEGGEQIQEAAPETA.

This sequence belongs to the GrpE family. Homodimer.

It is found in the cytoplasm. Participates actively in the response to hyperosmotic and heat shock by preventing the aggregation of stress-denatured proteins, in association with DnaK and GrpE. It is the nucleotide exchange factor for DnaK and may function as a thermosensor. Unfolded proteins bind initially to DnaJ; upon interaction with the DnaJ-bound protein, DnaK hydrolyzes its bound ATP, resulting in the formation of a stable complex. GrpE releases ADP from DnaK; ATP binding to DnaK triggers the release of the substrate protein, thus completing the reaction cycle. Several rounds of ATP-dependent interactions between DnaJ, DnaK and GrpE are required for fully efficient folding. This chain is Protein GrpE, found in Nitrosococcus oceani (strain ATCC 19707 / BCRC 17464 / JCM 30415 / NCIMB 11848 / C-107).